A 374-amino-acid chain; its full sequence is 4-hydroxybenzoate polyprenyltransferase, mitochondrial (374 aa).

Residues 1–63 (MLRLGGAGLV…RALSLSAAAV (63 aa)) constitute a mitochondrion transit peptide. The Mitochondrial matrix segment spans residues 64–83 (VNSAPRPLQPYLRLMRLDKP). The chain crosses the membrane as a helical span at residues 84 to 104 (IGTWLLYLPCTWSIGLAADPG). The Mitochondrial intermembrane portion of the chain corresponds to 105–108 (CFPD). Residues 109-129 (WYMLSLFGTGAILMRGAGCTI) form a helical membrane-spanning segment. Residues 130–153 (NDMWDRDFDKKVERTANRPIAAGD) are Mitochondrial matrix-facing. The chain crosses the membrane as a helical span at residues 154 to 174 (ISAFQSFVFLGAQLTLALGVL). Over 175 to 176 (LH) the chain is Mitochondrial intermembrane. A helical transmembrane segment spans residues 177–197 (LNYYSIAMGAASLLLVVTYPL). Over 198 to 200 (MKR) the chain is Mitochondrial matrix. A helical transmembrane segment spans residues 201 to 221 (VTFWPQLALGLTFNWGALLGW). The Mitochondrial intermembrane segment spans residues 222-230 (SAVKGSCDP). Residues 231–251 (AVCLPLYFSGVMWTLIYDTIY) traverse the membrane as a helical segment. Over 252–277 (AHQDKKDDALIGLKSTALLFRENTKQ) the chain is Mitochondrial matrix. A helical membrane pass occupies residues 278–298 (WLSGFGVAMVGALSLVGASSG). Over 299-300 (QT) the chain is Mitochondrial intermembrane. Residues 301–321 (LPYYAAVAAVGAHLAHQIYTV) form a helical membrane-spanning segment. Topologically, residues 322–332 (DIHRAEDCWEK) are mitochondrial matrix. Residues 333–353 (FTSNRTVGLLLFLGIVLGNLY) traverse the membrane as a helical segment. The Mitochondrial intermembrane segment spans residues 354 to 374 (KDKPDETKGVDAVGEESERTS).

Belongs to the UbiA prenyltransferase family. The cofactor is Mg(2+).

The protein localises to the mitochondrion inner membrane. It carries out the reaction an all-trans-polyprenyl diphosphate + 4-hydroxybenzoate = a 4-hydroxy-3-(all-trans-polyprenyl)benzoate + diphosphate. The enzyme catalyses all-trans-decaprenyl diphosphate + 4-hydroxybenzoate = 4-hydroxy-3-(all-trans-decaprenyl)benzoate + diphosphate. It catalyses the reaction all-trans-nonaprenyl diphosphate + 4-hydroxybenzoate = 4-hydroxy-3-(all-trans-nonaprenyl)benzoate + diphosphate. Its pathway is cofactor biosynthesis; ubiquinone biosynthesis. In terms of biological role, mediates the second step in the final reaction sequence of coenzyme Q (CoQ) biosynthesis. Catalyzes the prenylation of para-hydroxybenzoate (PHB) with an all-trans polyprenyl group (such as all-trans-nonaprenyl diphosphate). The length of the polyprenyl side chain varies depending on the species, in humans, the side chain is comprised of 10 isoprenyls producing CoQ10 (also known as ubiquinone), whereas rodents predominantly generate CoQ9. However, this specificity is not complete, human tissues have low amounts of CoQ9 and rodent organs contain some CoQ10. Plays a central role in the biosynthesis of CoQ9. CoQ9 is a vital molecule that transports electrons from mitochondrial respiratory chain complexes. CoQs also function as cofactors for uncoupling protein and plays a role as regulator of the extracellularly-induced ceramide-dependent apoptotic pathway. Regulates mitochondrial permeability transition pore (mPTP) opening and ROS production (pivotal events in cell death) in a tissue specific manner. This Rattus norvegicus (Rat) protein is 4-hydroxybenzoate polyprenyltransferase, mitochondrial.